The sequence spans 242 residues: Carboxy-S-adenosyl-L-methionine synthase (242 aa).

S-adenosyl-L-methionine contacts are provided by residues Y39, 64–66 (GCS), 89–90 (DN), 117–118 (DI), N132, and R199.

The protein belongs to the class I-like SAM-binding methyltransferase superfamily. Cx-SAM synthase family. In terms of assembly, homodimer.

The catalysed reaction is prephenate + S-adenosyl-L-methionine = carboxy-S-adenosyl-L-methionine + 3-phenylpyruvate + H2O. Catalyzes the conversion of S-adenosyl-L-methionine (SAM) to carboxy-S-adenosyl-L-methionine (Cx-SAM). This chain is Carboxy-S-adenosyl-L-methionine synthase, found in Vibrio atlanticus (strain LGP32) (Vibrio splendidus (strain Mel32)).